Consider the following 555-residue polypeptide: Formate--tetrahydrofolate ligase (555 aa).

65-72 lines the ATP pocket; that stretch reads TPAGEGKS.

This sequence belongs to the formate--tetrahydrofolate ligase family.

It carries out the reaction (6S)-5,6,7,8-tetrahydrofolate + formate + ATP = (6R)-10-formyltetrahydrofolate + ADP + phosphate. Its pathway is one-carbon metabolism; tetrahydrofolate interconversion. The sequence is that of Formate--tetrahydrofolate ligase from Staphylococcus epidermidis (strain ATCC 35984 / DSM 28319 / BCRC 17069 / CCUG 31568 / BM 3577 / RP62A).